Reading from the N-terminus, the 156-residue chain is Peptide methionine sulfoxide reductase MsrA (156 aa).

C10 is an active-site residue.

The protein belongs to the MsrA Met sulfoxide reductase family.

The catalysed reaction is L-methionyl-[protein] + [thioredoxin]-disulfide + H2O = L-methionyl-(S)-S-oxide-[protein] + [thioredoxin]-dithiol. It carries out the reaction [thioredoxin]-disulfide + L-methionine + H2O = L-methionine (S)-S-oxide + [thioredoxin]-dithiol. In terms of biological role, has an important function as a repair enzyme for proteins that have been inactivated by oxidation. Catalyzes the reversible oxidation-reduction of methionine sulfoxide in proteins to methionine. The sequence is that of Peptide methionine sulfoxide reductase MsrA from Acidobacterium capsulatum (strain ATCC 51196 / DSM 11244 / BCRC 80197 / JCM 7670 / NBRC 15755 / NCIMB 13165 / 161).